The sequence spans 231 residues: Small ribosomal subunit protein uS3 (231 aa).

The 69-residue stretch at 39–107 (IRKHIMKAIP…DVSLNIVEIR (69 aa)) folds into the KH type-2 domain.

Belongs to the universal ribosomal protein uS3 family. In terms of assembly, part of the 30S ribosomal subunit. Forms a tight complex with proteins S10 and S14.

In terms of biological role, binds the lower part of the 30S subunit head. Binds mRNA in the 70S ribosome, positioning it for translation. The chain is Small ribosomal subunit protein uS3 from Rhizorhabdus wittichii (strain DSM 6014 / CCUG 31198 / JCM 15750 / NBRC 105917 / EY 4224 / RW1) (Sphingomonas wittichii).